Reading from the N-terminus, the 433-residue chain is Xylose isomerase (433 aa).

Residues His-99 and Asp-102 contribute to the active site. Mg(2+) is bound by residues Glu-230, Glu-266, His-269, Asp-294, Asp-305, Asp-307, and Asp-337.

This sequence belongs to the xylose isomerase family. In terms of assembly, homotetramer. Mg(2+) serves as cofactor.

The protein localises to the cytoplasm. It catalyses the reaction alpha-D-xylose = alpha-D-xylulofuranose. The polypeptide is Xylose isomerase (Cereibacter sphaeroides (strain ATCC 17029 / ATH 2.4.9) (Rhodobacter sphaeroides)).